Consider the following 301-residue polypeptide: Protoheme IX farnesyltransferase (301 aa).

9 helical membrane-spanning segments follow: residues 29–49 (VVAL…PGVV), 51–71 (IVPL…AAAF), 96–118 (VSIA…VLYV), 123–143 (LTAW…TAYL), 151–171 (IVVG…AVTG), 177–197 (ALLL…ALAI), 223–243 (CIFL…LVGM), 244–264 (CGPV…YKAW), and 281–301 (FSIY…YLWL).

Belongs to the UbiA prenyltransferase family. Protoheme IX farnesyltransferase subfamily.

The protein localises to the cell inner membrane. It carries out the reaction heme b + (2E,6E)-farnesyl diphosphate + H2O = Fe(II)-heme o + diphosphate. It participates in porphyrin-containing compound metabolism; heme O biosynthesis; heme O from protoheme: step 1/1. Its function is as follows. Converts heme B (protoheme IX) to heme O by substitution of the vinyl group on carbon 2 of heme B porphyrin ring with a hydroxyethyl farnesyl side group. The polypeptide is Protoheme IX farnesyltransferase (Shewanella halifaxensis (strain HAW-EB4)).